The chain runs to 220 residues: Ribose-5-phosphate isomerase A (220 aa).

Substrate contacts are provided by residues Thr28–Thr31, Asp81–Asp84, and Lys94–Gly97. Glu103 serves as the catalytic Proton acceptor. Lys121 contributes to the substrate binding site.

Belongs to the ribose 5-phosphate isomerase family. In terms of assembly, homodimer.

The catalysed reaction is aldehydo-D-ribose 5-phosphate = D-ribulose 5-phosphate. The protein operates within carbohydrate degradation; pentose phosphate pathway; D-ribose 5-phosphate from D-ribulose 5-phosphate (non-oxidative stage): step 1/1. Functionally, catalyzes the reversible conversion of ribose-5-phosphate to ribulose 5-phosphate. The chain is Ribose-5-phosphate isomerase A from Leptothrix cholodnii (strain ATCC 51168 / LMG 8142 / SP-6) (Leptothrix discophora (strain SP-6)).